A 144-amino-acid polypeptide reads, in one-letter code: Mannitol-specific phosphotransferase enzyme IIA component (144 aa).

Residues 3-142 form the PTS EIIA type-2 domain; sequence ELFSNDNIFL…EEIKQVFEEA (140 aa). Residue His-63 is the Tele-phosphohistidine intermediate of the active site. At His-63 the chain carries Phosphohistidine; by HPr.

In terms of assembly, homodimer or homotrimer. Seems to be a monomer when not phosphorylated.

It localises to the cytoplasm. The phosphoenolpyruvate-dependent sugar phosphotransferase system (sugar PTS), a major carbohydrate active transport system, catalyzes the phosphorylation of incoming sugar substrates concomitantly with their translocation across the cell membrane. The enzyme II CmtAB PTS system is involved in D-mannitol transport. This chain is Mannitol-specific phosphotransferase enzyme IIA component (mtlF), found in Staphylococcus aureus (strain MRSA252).